The chain runs to 668 residues: MPASLLPPTFLPHHLRRLAPAGCTTSSVTSSSVSIPASRYDFEPLLAYLSSPSVSASLTSPSPPASVPAPEHRLAASYSAVPSHEWHALLRDLAASDASLPLAFALLPFLHRHRLCFPLDLLLSSLLHSLSVSGRLLPHSLLLSFPPSLSDPPSPLLLNSLLAASAAASRPAVALRLLSLLREHDFLPDLASYSHLLASLLNTRDPPDAALLERLLGDLRESRLEPDAPLFSDLISAFARAALPDAALELLASAQAIGLTPRSNAVTALISALGTAGRVAEAEALFLEFFLAGEIKPRTRAYNALLKGYVRIASLKNAEQVLDEMSQCGVAPDEATYSLLVDAYTRAGRWESARILLKEMEADGVKPSSYVFSRILAGFRDRGDWQKAFAVLREMQASGVRPDRHFYNVMIDTFGKYNCLGHAMDAFNKMREEGIEPDVVTWNTLIDAHCKGGRHDRAAELFEEMRESNCPPGTTTYNIMINLLGEQEHWEGVEAMLSEMKEQGLVPNIITYTTLVDVYGRSGRYKEAIDCIEAMKADGLKPSPTMYHALVNAYAQRGLADHALNVVKAMKADGLEVSILVLNSLINAFGEDRRVVEAFSVLQFMRENGLRPDVITYTTLMKALIRVEQFDKVPVIYEEMITSGCAPDRKARAMLRSGLKYIKHMRVA.

The transit peptide at 1–64 directs the protein to the chloroplast; the sequence is MPASLLPPTF…SASLTSPSPP (64 aa). PPR repeat units lie at residues 154-188, 189-226, 227-261, 262-297, 298-332, 333-367, 368-402, 403-437, 438-472, 473-507, 508-542, 543-577, 578-612, and 613-647; these read SPLLLNSLLAASAAASRPAVALRLLSLLREHDFLP, DLASYSHLLASLLNTRDPPDAALLERLLGDLRESRLEP, DAPLFSDLISAFARAALPDAALELLASAQAIGLTP, RSNAVTALISALGTAGRVAEAEALFLEFFLAGEIKP, RTRAYNALLKGYVRIASLKNAEQVLDEMSQCGVAP, DEATYSLLVDAYTRAGRWESARILLKEMEADGVKP, SSYVFSRILAGFRDRGDWQKAFAVLREMQASGVRP, DRHFYNVMIDTFGKYNCLGHAMDAFNKMREEGIEP, DVVTWNTLIDAHCKGGRHDRAAELFEEMRESNCPP, GTTTYNIMINLLGEQEHWEGVEAMLSEMKEQGLVP, NIITYTTLVDVYGRSGRYKEAIDCIEAMKADGLKP, SPTMYHALVNAYAQRGLADHALNVVKAMKADGLEV, SILVLNSLINAFGEDRRVVEAFSVLQFMRENGLRP, and DVITYTTLMKALIRVEQFDKVPVIYEEMITSGCAP.

The protein belongs to the PPR family. P subfamily. Component of a multisubunit complex.

It localises to the plastid. The protein resides in the chloroplast stroma. In terms of biological role, required for the translation of the chloroplast petA and petD mRNAs. Required for the processing of the petD mRNA from a polycistronic precursor. Binds with high affinity to the 5'-UTR of the chloroplastic petA transcript. Activates psaC and petA translation by binding their 5'-UTRs. This chain is Pentatricopeptide repeat-containing protein CRP1, chloroplastic, found in Zea mays (Maize).